A 242-amino-acid chain; its full sequence is Octanoyltransferase (242 aa).

The 176-residue stretch at serine 31–glutamine 206 folds into the BPL/LPL catalytic domain. Substrate contacts are provided by residues arginine 70–histidine 77, serine 137–glycine 139, and glycine 150–alanine 152. The Acyl-thioester intermediate role is filled by cysteine 168.

It belongs to the LipB family.

Its subcellular location is the cytoplasm. It carries out the reaction octanoyl-[ACP] + L-lysyl-[protein] = N(6)-octanoyl-L-lysyl-[protein] + holo-[ACP] + H(+). It functions in the pathway protein modification; protein lipoylation via endogenous pathway; protein N(6)-(lipoyl)lysine from octanoyl-[acyl-carrier-protein]: step 1/2. Catalyzes the transfer of endogenously produced octanoic acid from octanoyl-acyl-carrier-protein onto the lipoyl domains of lipoate-dependent enzymes. Lipoyl-ACP can also act as a substrate although octanoyl-ACP is likely to be the physiological substrate. This Coxiella burnetii (strain CbuG_Q212) (Coxiella burnetii (strain Q212)) protein is Octanoyltransferase.